The primary structure comprises 296 residues: Lipoyl synthase (296 aa).

7 residues coordinate [4Fe-4S] cluster: Cys-37, Cys-42, Cys-48, Cys-63, Cys-67, Cys-70, and Ser-276. The Radical SAM core domain occupies 49–265 (WSKKHTTVMI…ERVAKTKGFL (217 aa)).

It belongs to the radical SAM superfamily. Lipoyl synthase family. It depends on [4Fe-4S] cluster as a cofactor.

It localises to the cytoplasm. It catalyses the reaction [[Fe-S] cluster scaffold protein carrying a second [4Fe-4S](2+) cluster] + N(6)-octanoyl-L-lysyl-[protein] + 2 oxidized [2Fe-2S]-[ferredoxin] + 2 S-adenosyl-L-methionine + 4 H(+) = [[Fe-S] cluster scaffold protein] + N(6)-[(R)-dihydrolipoyl]-L-lysyl-[protein] + 4 Fe(3+) + 2 hydrogen sulfide + 2 5'-deoxyadenosine + 2 L-methionine + 2 reduced [2Fe-2S]-[ferredoxin]. It participates in protein modification; protein lipoylation via endogenous pathway; protein N(6)-(lipoyl)lysine from octanoyl-[acyl-carrier-protein]: step 2/2. In terms of biological role, catalyzes the radical-mediated insertion of two sulfur atoms into the C-6 and C-8 positions of the octanoyl moiety bound to the lipoyl domains of lipoate-dependent enzymes, thereby converting the octanoylated domains into lipoylated derivatives. This chain is Lipoyl synthase, found in Rickettsia massiliae (strain Mtu5).